Reading from the N-terminus, the 807-residue chain is MSRPIEIANVSSGNRRTLPALHGSSFSSRSELDNNTNSKISRRLRELVCQRMGENPLRLRQSFHETISNDSYGNSEKLVIRPCICCNSVLRYPAQAMCFRCSLCMTVNDVYFCLSGSQIKTKASTDGSQFISVEHFVETIHQTRSALQLAKQRTGNVQAIVAAGLPLRELISLVFGSPPILNKLFSVKNGCSIQSSGLNYKLIYQLYHDITNLDILITNELLRAIESLLRRPMLYCHDPADYQYLLILLENPLLNSKSKNIVNKSSSILKRILGVLSNLNEKTHHFFISCFKKQPYNNPKFFRRKVDLINKFIGQRLMETYSRNKRKHYYNNDWQIKSAAITMALLYSANSQMRLIDRSSFYCIMADFINLYHDFELWEQKINCFCFCQYPFLLSMGAKISILQLDARRKMEIKAREAFFSSILSKMNVEPYLMIRVRRDRLLEDSLRQINDRNKDFRKALKVEFLGEEGIDAGGLKREWLLLLTRKVFSPEFGLFVNCEESSNYLWFNYSHRSKEIDYYHMSGILMGIAIHNSINLDVQMPRAFYKKLLQLPLSFNDLDDFQPSLYRGLKELLLFEGDVKNTYGLNFTINLKAVEGFRTVELKEGGSELSVDNENRKEYVLRYVDYLLNTTVKKQFSAFFDGFMKVCGGNAISLFQDNEISKLIRGSEEVIDWELLKNVCVYDFYDQNAISNSISESEPSMTASKYLCHSFVSKRKIILWFWDLISHYSLKMQKLFLIFVTGSDRIPATGAHNFQLRISVLGPDSDQLPISHTCFNHLCIWEYSSREKLKKKLDTALLETNGFNIR.

The HECT domain maps to 453-807 (RNKDFRKALK…LLETNGFNIR (355 aa)). Cys-775 acts as the Glycyl thioester intermediate in catalysis.

The protein resides in the cytoplasm. It is found in the cytoskeleton. The protein localises to the microtubule organizing center. It localises to the spindle pole body. The enzyme catalyses S-ubiquitinyl-[E2 ubiquitin-conjugating enzyme]-L-cysteine + [acceptor protein]-L-lysine = [E2 ubiquitin-conjugating enzyme]-L-cysteine + N(6)-ubiquitinyl-[acceptor protein]-L-lysine.. It functions in the pathway protein modification; protein ubiquitination. Functionally, probable E3 ubiquitin-protein ligase. Has a role in meiosis. The polypeptide is Probable E3 ubiquitin-protein ligase mug30 (mug30) (Schizosaccharomyces pombe (strain 972 / ATCC 24843) (Fission yeast)).